The following is a 476-amino-acid chain: Serine/threonine-protein kinase PknF (476 aa).

A phosphothreonine; by autocatalysis mark is found at Thr-8 and Thr-13. The Protein kinase domain maps to 12–279 (FTIVRQLGSG…FARALGHRLG (268 aa)). Residues 18 to 26 (LGSGGMGEV) and Lys-41 each bind ATP. The active-site Proton acceptor is the Asp-137. A phosphothreonine; by autocatalysis mark is found at Thr-173, Thr-175, and Thr-287. Residue Ser-290 is modified to Phosphoserine; by autocatalysis. The tract at residues 332 to 376 (ADDERAAQPARTRTTTSAGTTTSVAPASTTRPAPTTPTTTGAADT) is disordered. The span at 338–376 (AQPARTRTTTSAGTTTSVAPASTTRPAPTTPTTTGAADT) shows a compositional bias: low complexity.

This sequence belongs to the protein kinase superfamily. Ser/Thr protein kinase family. Dephosphorylated by PstP.

It catalyses the reaction L-seryl-[protein] + ATP = O-phospho-L-seryl-[protein] + ADP + H(+). The catalysed reaction is L-threonyl-[protein] + ATP = O-phospho-L-threonyl-[protein] + ADP + H(+). In Mycobacterium bovis (strain ATCC BAA-935 / AF2122/97), this protein is Serine/threonine-protein kinase PknF (pknF).